We begin with the raw amino-acid sequence, 141 residues long: Hemoglobin subunit alpha (141 aa).

The Globin domain maps to 1–141; it reads VLSSTDKSNV…VSTVLTSKYR (141 aa). S3 bears the Phosphoserine mark. N6-succinyllysine occurs at positions 7 and 11. K16 carries the post-translational modification N6-acetyllysine; alternate. K16 bears the N6-succinyllysine; alternate mark. Y24 carries the post-translational modification Phosphotyrosine. Residue S35 is modified to Phosphoserine. An N6-succinyllysine modification is found at K40. Residue H58 coordinates O2. H87 contributes to the heme b binding site. Residue S102 is modified to Phosphoserine. Position 108 is a phosphothreonine (T108). S124 and S131 each carry phosphoserine. 2 positions are modified to phosphothreonine: T134 and T137. S138 is modified (phosphoserine).

This sequence belongs to the globin family. In terms of assembly, heterotetramer of two alpha chains and two beta chains. As to expression, red blood cells.

Its function is as follows. Involved in oxygen transport from the lung to the various peripheral tissues. In terms of biological role, hemopressin acts as an antagonist peptide of the cannabinoid receptor CNR1. Hemopressin-binding efficiently blocks cannabinoid receptor CNR1 and subsequent signaling. The polypeptide is Hemoglobin subunit alpha (HBA) (Pteropus alecto (Black flying fox)).